Here is a 310-residue protein sequence, read N- to C-terminus: MSSKLLTIQLLEELVHAAELNQEGKTADYIPELANVNQELTAIAVQALGEKTLAYSNNPLHPVTLQSTGKMIPLIGLLEEFGADQLFEWVKVEPSGDDFASITRLEQFGPKPSNPMLNAGAIALCSRIPGIGEQQFRWLEHWVQKLFNQRLSINPLVFASEKRTGNRNRALAYLLKSRNNLGADVHETLDLYFALCSYEAMLDQMLYLPTLLANRGKDPDTGEQILSTETCKITLAIMATCGLYDETGTHMVKTGMPAKSGVSGYTIAVVPGKAGIVVLSPRVNAKGNSIRGEIMLEGLSKAMNWHFALP.

Residues serine 67, asparagine 118, glutamate 161, asparagine 168, tyrosine 192, tyrosine 244, and valine 262 each coordinate substrate.

It belongs to the glutaminase family. As to quaternary structure, homotetramer.

It catalyses the reaction L-glutamine + H2O = L-glutamate + NH4(+). The protein is Glutaminase of Legionella pneumophila subsp. pneumophila (strain Philadelphia 1 / ATCC 33152 / DSM 7513).